Consider the following 319-residue polypeptide: Very-long-chain 3-oxoacyl-CoA reductase-A (319 aa).

Residues 17–37 form a helical membrane-spanning segment; sequence LFWVGALITASLALYVVYKTI. 56 to 85 serves as a coordination point for NADP(+); it reads GKWAVVTGATDGIGKSYAEELARRGFSMML. Helical transmembrane passes span 188–208 and 282–302; these read GVIL…LTIY and AVMG…NLGL. A substrate-binding site is contributed by Ser195. Tyr208 serves as the catalytic Proton acceptor.

Belongs to the short-chain dehydrogenases/reductases (SDR) family. 17-beta-HSD 3 subfamily.

The protein resides in the endoplasmic reticulum membrane. The enzyme catalyses a very-long-chain (3R)-3-hydroxyacyl-CoA + NADP(+) = a very-long-chain 3-oxoacyl-CoA + NADPH + H(+). It carries out the reaction 17beta-estradiol + NAD(+) = estrone + NADH + H(+). The catalysed reaction is 17beta-estradiol + NADP(+) = estrone + NADPH + H(+). It functions in the pathway lipid metabolism; fatty acid biosynthesis. It participates in steroid biosynthesis; estrogen biosynthesis. Its function is as follows. Catalyzes the second of the four reactions of the long-chain fatty acids elongation cycle. This endoplasmic reticulum-bound enzymatic process, allows the addition of two carbons to the chain of long- and very long-chain fatty acids/VLCFAs per cycle. This enzyme has a 3-ketoacyl-CoA reductase activity, reducing 3-ketoacyl-CoA to 3-hydroxyacyl-CoA, within each cycle of fatty acid elongation. Thereby, it may participate in the production of VLCFAs of different chain lengths that are involved in multiple biological processes as precursors of membrane lipids and lipid mediators. May also catalyze the transformation of estrone (E1) into estradiol (E2) and play a role in estrogen formation. The polypeptide is Very-long-chain 3-oxoacyl-CoA reductase-A (hsd17b12a) (Danio rerio (Zebrafish)).